The following is a 101-amino-acid chain: Apolipoprotein C-II (101 aa).

The signal sequence occupies residues 1-22; it reads MGTRYFLVGFLILLVLGFEVQG. Positions 66–74 are lipid binding; sequence AVDEKIRDI. Residues 78 to 101 are lipoprotein lipase cofactor; that stretch reads STAAVTTYAGIITDQVFSVLSGKD.

This sequence belongs to the apolipoprotein C2 family. Proapolipoprotein C-II is synthesized as a sialic acid containing glycoprotein which is subsequently desialylated prior to its proteolytic processing. In terms of processing, proapolipoprotein C-II undergoes proteolytic cleavage of its N-terminal hexapeptide to generate apolipoprotein C-II. In bovine, proapolipoprotein C-II was found to be the minor form whereas apolipoprotein C-II was found to be the major form in plasma.

It localises to the secreted. Its function is as follows. Component of chylomicrons, very low-density lipoproteins (VLDL), low-density lipoproteins (LDL), and high-density lipoproteins (HDL) in plasma. Plays an important role in lipoprotein metabolism as an activator of lipoprotein lipase. Both proapolipoprotein C-II and apolipoprotein C-II can activate lipoprotein lipase. The polypeptide is Apolipoprotein C-II (APOC2) (Bos taurus (Bovine)).